A 355-amino-acid chain; its full sequence is 3-dehydroquinate synthase (355 aa).

NAD(+) contacts are provided by residues 71–76, 105–109, 129–130, lysine 142, and lysine 151; these read EGEERK, GVVGD, and TS. 3 residues coordinate Zn(2+): glutamate 184, histidine 246, and histidine 263.

Belongs to the sugar phosphate cyclases superfamily. Dehydroquinate synthase family. NAD(+) is required as a cofactor. Co(2+) serves as cofactor. It depends on Zn(2+) as a cofactor.

Its subcellular location is the cytoplasm. The catalysed reaction is 7-phospho-2-dehydro-3-deoxy-D-arabino-heptonate = 3-dehydroquinate + phosphate. The protein operates within metabolic intermediate biosynthesis; chorismate biosynthesis; chorismate from D-erythrose 4-phosphate and phosphoenolpyruvate: step 2/7. Catalyzes the conversion of 3-deoxy-D-arabino-heptulosonate 7-phosphate (DAHP) to dehydroquinate (DHQ). The protein is 3-dehydroquinate synthase of Streptococcus pneumoniae serotype 4 (strain ATCC BAA-334 / TIGR4).